Consider the following 973-residue polypeptide: Translation initiation factor IF-2 (973 aa).

The disordered stretch occupies residues 52 to 388; it reads PDQEEVKPAA…QAQKPAQPLE (337 aa). Composition is skewed to basic and acidic residues over residues 83–120, 128–148, 157–172, 186–202, 210–246, 272–288, 314–333, and 343–360; these read ESRKKDAAMLDSQKPDRDRVQKNGRERAGKATRADHYK, VPSRPPDRRFQERPKQSDKAR, QGARLKTADFVQERTR, VQQERVQDRQQKERPPF, PQHEHKPQDSVKERPHPERASREADNAKRAERLDKGA, RAGERGARPGGLHETKP, LLDDRRRQTEEKVKVTEKQK, and KSREKRNAMAELAEERLR. Over residues 374–386 the composition is skewed to low complexity; the sequence is AKPQEQAQKPAQP. The region spanning 472 to 641 is the tr-type G domain; it reads DRPCVVTVMG…LLVAEMSELK (170 aa). Residues 481-488 form a G1 region; it reads GHVDHGKT. Position 481–488 (481–488) interacts with GTP; it reads GHVDHGKT. The segment at 506–510 is G2; it reads GITQH. The G3 stretch occupies residues 527–530; sequence DTPG. GTP is bound by residues 527 to 531 and 581 to 584; these read DTPGH and NKID. The G4 stretch occupies residues 581–584; sequence NKID. Residues 617–619 form a G5 region; sequence SAL.

The protein belongs to the TRAFAC class translation factor GTPase superfamily. Classic translation factor GTPase family. IF-2 subfamily.

It is found in the cytoplasm. One of the essential components for the initiation of protein synthesis. Protects formylmethionyl-tRNA from spontaneous hydrolysis and promotes its binding to the 30S ribosomal subunits. Also involved in the hydrolysis of GTP during the formation of the 70S ribosomal complex. The chain is Translation initiation factor IF-2 from Pelotomaculum thermopropionicum (strain DSM 13744 / JCM 10971 / SI).